Reading from the N-terminus, the 987-residue chain is Centrosomal protein of 120 kDa (987 aa).

The C2 1 domain occupies 1–112 (MVSKSDQLLI…QETKQAPKWY (112 aa)). The interval 352-408 (KTQNEHEPHHSKKRVLTPIKENTHTGPQSPSESPVPPHNQSPPTKDDATESEVESLL) is disordered. The C2 2 domain maps to 438–567 (SEAASGQKIA…LSSEKTRFLG (130 aa)). Residues 670 to 919 (ENQLKQKELA…RLRQQEQKQY (250 aa)) adopt a coiled-coil conformation. The segment covering 912-926 (RQQEQKQYPDSREIA) has biased composition (basic and acidic residues). The disordered stretch occupies residues 912-937 (RQQEQKQYPDSREIASGKMDGPHGSA). Position 936 is a phosphoserine (Ser936).

This sequence belongs to the CEP120 family. As to quaternary structure, interacts with TACC2 and TACC3. Interacts with CCDC52.

The protein localises to the cytoplasm. The protein resides in the cytoskeleton. It is found in the microtubule organizing center. It localises to the centrosome. Functionally, plays a role in the microtubule-dependent coupling of the nucleus and the centrosome. Involved in the processes that regulate centrosome-mediated interkinetic nuclear migration (INM) of neural progenitors and for proper positioning of neurons during brain development. Also implicated in the migration and selfrenewal of neural progenitors. May play a role in centriole duplication during mitosis. Required for the recruitment of CEP295 to the proximal end of new-born centrioles at the centriolar microtubule wall during early S phase in a PLK4-dependent manner. In Bos taurus (Bovine), this protein is Centrosomal protein of 120 kDa (CEP120).